A 97-amino-acid chain; its full sequence is Large ribosomal subunit protein uL23 (97 aa).

Belongs to the universal ribosomal protein uL23 family. As to quaternary structure, part of the 50S ribosomal subunit. Contacts protein L29, and trigger factor when it is bound to the ribosome.

Functionally, one of the early assembly proteins it binds 23S rRNA. One of the proteins that surrounds the polypeptide exit tunnel on the outside of the ribosome. Forms the main docking site for trigger factor binding to the ribosome. This Sulfurihydrogenibium sp. (strain YO3AOP1) protein is Large ribosomal subunit protein uL23.